The primary structure comprises 506 residues: ATP synthase subunit alpha, chloroplastic (506 aa).

170 to 177 (GDRQTGKT) provides a ligand contact to ATP.

It belongs to the ATPase alpha/beta chains family. In terms of assembly, F-type ATPases have 2 components, CF(1) - the catalytic core - and CF(0) - the membrane proton channel. CF(1) has five subunits: alpha(3), beta(3), gamma(1), delta(1), epsilon(1). CF(0) has four main subunits: a, b, b' and c.

Its subcellular location is the plastid. The protein resides in the chloroplast thylakoid membrane. It catalyses the reaction ATP + H2O + 4 H(+)(in) = ADP + phosphate + 5 H(+)(out). Its function is as follows. Produces ATP from ADP in the presence of a proton gradient across the membrane. The alpha chain is a regulatory subunit. This Euglena gracilis protein is ATP synthase subunit alpha, chloroplastic.